We begin with the raw amino-acid sequence, 86 residues long: Toxin ICK-18 (86 aa).

The first 19 residues, Met-1–Gly-19, serve as a signal peptide directing secretion. Disulfide bonds link Cys-35–Cys-49, Cys-42–Cys-61, Cys-48–Cys-76, and Cys-79–Cys-86.

Belongs to the neurotoxin 21 family. As to expression, expressed by the venom gland.

The protein resides in the secreted. Probable neurotoxin with ion channel impairing activity. The polypeptide is Toxin ICK-18 (Trittame loki (Brush-footed trapdoor spider)).